We begin with the raw amino-acid sequence, 399 residues long: MNETLFTGISQLVTPAPGVQRGAAMRELTRLDDAAMLVRDGVIAWTGSRQQAPASTSIHDLGGVAVVPGLVDPHTHSVWAGDRLADFEARISGVPYEEILARGGGIRSTMRATAASSVEALVALARPRLEALRDSGATTVEVKSGYGLDFAAERRMLQAVQILQAEFQLIPTLLIHVPPQDHRAAYVQGVCEDLIPWVAAEHLATAVDVFCEKEAFSVEETRQILAAAQQHGLQVKVHADQFQAIGGTELACQLGALSVDHLEASGQAQIEALAASDTVATILPGVTLHLGLPAAPGRRLIDAGAAVAVGTDLNPGSSPVFSSQLVLALAVRLCGLTPPEALSACTVNAAHALGLRDRGALAPGQRADFLALHSSDWRDLAYTLGASPVRDVWQAGTRV.

Fe(3+) is bound by residues His74 and His76. Residues His74 and His76 each coordinate Zn(2+). 3 residues coordinate 4-imidazolone-5-propanoate: Arg83, Tyr146, and His176. Residue Tyr146 coordinates N-formimidoyl-L-glutamate. Position 238 (His238) interacts with Fe(3+). A Zn(2+)-binding site is contributed by His238. Gln241 is a 4-imidazolone-5-propanoate binding site. A Fe(3+)-binding site is contributed by Asp312. Asp312 contributes to the Zn(2+) binding site. N-formimidoyl-L-glutamate contacts are provided by Asn314 and Gly316. A 4-imidazolone-5-propanoate-binding site is contributed by Ser317.

Belongs to the metallo-dependent hydrolases superfamily. HutI family. Requires Zn(2+) as cofactor. Fe(3+) serves as cofactor.

The protein resides in the cytoplasm. It carries out the reaction 4-imidazolone-5-propanoate + H2O = N-formimidoyl-L-glutamate. The protein operates within amino-acid degradation; L-histidine degradation into L-glutamate; N-formimidoyl-L-glutamate from L-histidine: step 3/3. Catalyzes the hydrolytic cleavage of the carbon-nitrogen bond in imidazolone-5-propanoate to yield N-formimidoyl-L-glutamate. It is the third step in the universal histidine degradation pathway. This is Imidazolonepropionase from Deinococcus deserti (strain DSM 17065 / CIP 109153 / LMG 22923 / VCD115).